The following is a 117-amino-acid chain: NADH-ubiquinone oxidoreductase chain 3 (117 aa).

3 consecutive transmembrane segments (helical) span residues 4 to 24 (IILI…LASI), 60 to 80 (ITII…MIII), and 86 to 106 (IMIW…GLYH).

It belongs to the complex I subunit 3 family.

The protein resides in the mitochondrion membrane. It catalyses the reaction a ubiquinone + NADH + 5 H(+)(in) = a ubiquinol + NAD(+) + 4 H(+)(out). Functionally, core subunit of the mitochondrial membrane respiratory chain NADH dehydrogenase (Complex I) that is believed to belong to the minimal assembly required for catalysis. Complex I functions in the transfer of electrons from NADH to the respiratory chain. The immediate electron acceptor for the enzyme is believed to be ubiquinone. This chain is NADH-ubiquinone oxidoreductase chain 3 (mt:ND3), found in Drosophila subobscura (Fruit fly).